Here is a 219-residue protein sequence, read N- to C-terminus: GPI ethanolamine phosphate transferase, stabilizing subunit (219 aa).

The next 6 membrane-spanning stretches (helical) occupy residues tyrosine 11–leucine 31, threonine 42–valine 62, tyrosine 86–isoleucine 106, phenylalanine 113–proline 133, leucine 155–leucine 175, and threonine 189–tryptophan 209.

The protein belongs to the PIGF family. In terms of assembly, part of the ethanolamine phosphate transferase 3 complex composed by PIGO and PIGF. Part of the ethanolamine phosphate transferase 2 complex with PIGG. PIGF is required to stabilize PIGG and PIGO.

It localises to the endoplasmic reticulum membrane. It functions in the pathway glycolipid biosynthesis; glycosylphosphatidylinositol-anchor biosynthesis. Its function is as follows. Stabilizing subunit of the ethanolamine phosphate transferase 3 and ethanolamine phosphate transferase 2 complexes that sequentially transfer an ethanolamine phosphate (EtNP) from a phosphatidylethanolamine (PE) to the 6-OH position of the third alpha-1,2-linked mannose and the second alpha-1,6-linked mannose of the alpha-D-Man-(1-&gt;2)-alpha-D-Man-(1-&gt;6)-2-PEtn-alpha-D-Man-(1-&gt;4)-alpha-D-GlcN-(1-&gt;6)-(1-radyl,2-acyl-sn-glycero-3-phospho)-2-acyl-inositol (also termed H6) intermediate to generate a 6-PEtn-alpha-D-Man-(1-&gt;2)-6-PEtn-alpha-D-Man-(1-&gt;6)-2-PEtn-alpha-D-Man-(1-&gt;4)-alpha-D-GlcN-(1-&gt;6)-(1-radyl,2-acyl-sn-glycero-3-phospho)-2-acyl-inositol (also termed H8). Participates in the tenth and eleventh steps of the glycosylphosphatidylinositol-anchor biosynthesis, in association with PIGO and PIGG, respectively. This Homo sapiens (Human) protein is GPI ethanolamine phosphate transferase, stabilizing subunit.